We begin with the raw amino-acid sequence, 162 residues long: MLNQLENLMERVGGSNKLVDRWLDVRKHLLVAYYNLVGIKPGKESYMRLNEKALDDFCQSLVDYLSAGHFSIYERILHKLEGNGQLLHAAKIWPLLEDNTQRIMDYYDTSLETAIDHDNCLEFQQALSDIGEALEARFVLEDKLIMLVFDAMHDGARVKRPA.

It belongs to the Rsd/AlgQ family. In terms of assembly, interacts with RpoD.

Its subcellular location is the cytoplasm. In terms of biological role, binds RpoD and negatively regulates RpoD-mediated transcription activation by preventing the interaction between the primary sigma factor RpoD with the catalytic core of the RNA polymerase and with promoter DNA. May be involved in replacement of the RNA polymerase sigma subunit from RpoD to RpoS during the transition from exponential growth to the stationary phase. This Salmonella typhi protein is Regulator of sigma D.